The chain runs to 62 residues: uncharacterized protein (62 aa).

It belongs to the asfivirus C62L family.

This is an uncharacterized protein from African swine fever virus (isolate Tick/South Africa/Pretoriuskop Pr4/1996) (ASFV).